Consider the following 91-residue polypeptide: UPF0250 protein Lcho_4239 (91 aa).

The protein belongs to the UPF0250 family.

The sequence is that of UPF0250 protein Lcho_4239 from Leptothrix cholodnii (strain ATCC 51168 / LMG 8142 / SP-6) (Leptothrix discophora (strain SP-6)).